The following is a 460-amino-acid chain: ATP synthase subunit beta (460 aa).

150-157 (GGAGVGKT) contributes to the ATP binding site.

Belongs to the ATPase alpha/beta chains family. As to quaternary structure, F-type ATPases have 2 components, CF(1) - the catalytic core - and CF(0) - the membrane proton channel. CF(1) has five subunits: alpha(3), beta(3), gamma(1), delta(1), epsilon(1). CF(0) has three main subunits: a(1), b(2) and c(9-12). The alpha and beta chains form an alternating ring which encloses part of the gamma chain. CF(1) is attached to CF(0) by a central stalk formed by the gamma and epsilon chains, while a peripheral stalk is formed by the delta and b chains.

Its subcellular location is the cell inner membrane. It catalyses the reaction ATP + H2O + 4 H(+)(in) = ADP + phosphate + 5 H(+)(out). Produces ATP from ADP in the presence of a proton gradient across the membrane. The catalytic sites are hosted primarily by the beta subunits. This is ATP synthase subunit beta from Salmonella agona (strain SL483).